The sequence spans 184 residues: Class II hydrophobin 6 (184 aa).

The N-terminal stretch at 1 to 16 (MNFMLLSAALASMAVA) is a signal peptide. 4 disulfides stabilise this stretch: Cys122/Cys169, Cys130/Cys160, Cys131/Cys143, and Cys170/Cys181.

Belongs to the cerato-ulmin hydrophobin family. As to quaternary structure, homotetramer. Further self-assembles to form highly ordered films at water-air interfaces through intermolecular interactions. Expressed in the mycellium.

Its subcellular location is the secreted. Functionally, aerial growth, conidiation, and dispersal of filamentous fungi in the environment rely upon a capability of their secreting small amphipathic proteins called hydrophobins (HPBs) with low sequence identity. Class I can self-assemble into an outermost layer of rodlet bundles on aerial cell surfaces, conferring cellular hydrophobicity that supports fungal growth, development and dispersal; whereas Class II form highly ordered films at water-air interfaces through intermolecular interactions but contribute nothing to the rodlet structure. Hcf-6 is a class II hydrophobin that is involved in adhesion and in tomato plants infection. Is secreted to form a coat both around and beneath the fungus. The protein is Class II hydrophobin 6 of Passalora fulva (Tomato leaf mold).